The sequence spans 199 residues: ATP-dependent Clp protease proteolytic subunit (199 aa).

The Nucleophile role is filled by Ser98. His123 is an active-site residue.

Belongs to the peptidase S14 family. In terms of assembly, fourteen ClpP subunits assemble into 2 heptameric rings which stack back to back to give a disk-like structure with a central cavity, resembling the structure of eukaryotic proteasomes.

It is found in the cytoplasm. The enzyme catalyses Hydrolysis of proteins to small peptides in the presence of ATP and magnesium. alpha-casein is the usual test substrate. In the absence of ATP, only oligopeptides shorter than five residues are hydrolyzed (such as succinyl-Leu-Tyr-|-NHMec, and Leu-Tyr-Leu-|-Tyr-Trp, in which cleavage of the -Tyr-|-Leu- and -Tyr-|-Trp bonds also occurs).. Its function is as follows. Cleaves peptides in various proteins in a process that requires ATP hydrolysis. Has a chymotrypsin-like activity. Plays a major role in the degradation of misfolded proteins. This is ATP-dependent Clp protease proteolytic subunit from Ehrlichia chaffeensis (strain ATCC CRL-10679 / Arkansas).